Here is a 405-residue protein sequence, read N- to C-terminus: S-adenosylmethionine synthase (405 aa).

Position 19 (histidine 19) interacts with ATP. Aspartate 21 is a binding site for Mg(2+). Glutamate 47 contacts K(+). L-methionine contacts are provided by glutamate 60 and glutamine 103. The flexible loop stretch occupies residues 103–113 (QSADIAQGVDK). Residues 179 to 181 (DGK), 246 to 247 (RF), aspartate 255, 261 to 262 (RK), alanine 278, and lysine 282 contribute to the ATP site. Position 255 (aspartate 255) interacts with L-methionine. Position 286 (lysine 286) interacts with L-methionine.

The protein belongs to the AdoMet synthase family. In terms of assembly, homotetramer; dimer of dimers. It depends on Mg(2+) as a cofactor. K(+) serves as cofactor.

The protein resides in the cytoplasm. It catalyses the reaction L-methionine + ATP + H2O = S-adenosyl-L-methionine + phosphate + diphosphate. It participates in amino-acid biosynthesis; S-adenosyl-L-methionine biosynthesis; S-adenosyl-L-methionine from L-methionine: step 1/1. Functionally, catalyzes the formation of S-adenosylmethionine (AdoMet) from methionine and ATP. The overall synthetic reaction is composed of two sequential steps, AdoMet formation and the subsequent tripolyphosphate hydrolysis which occurs prior to release of AdoMet from the enzyme. This Shouchella clausii (strain KSM-K16) (Alkalihalobacillus clausii) protein is S-adenosylmethionine synthase.